Reading from the N-terminus, the 192-residue chain is Peptide deformylase (192 aa).

Fe cation contacts are provided by Cys102 and His145. The active site involves Glu146. Residue His149 participates in Fe cation binding.

This sequence belongs to the polypeptide deformylase family. Fe(2+) serves as cofactor.

The catalysed reaction is N-terminal N-formyl-L-methionyl-[peptide] + H2O = N-terminal L-methionyl-[peptide] + formate. In terms of biological role, removes the formyl group from the N-terminal Met of newly synthesized proteins. Requires at least a dipeptide for an efficient rate of reaction. N-terminal L-methionine is a prerequisite for activity but the enzyme has broad specificity at other positions. In Thermus thermophilus (strain ATCC BAA-163 / DSM 7039 / HB27), this protein is Peptide deformylase.